We begin with the raw amino-acid sequence, 890 residues long: DNA mismatch repair protein MutS (890 aa).

Basic and acidic residues predominate over residues 1-13 (MDKGINLQNDKEP). The disordered stretch occupies residues 1–23 (MDKGINLQNDKEPSPMAEGNPAD). 649 to 656 (GPNMGGKS) contributes to the ATP binding site.

Belongs to the DNA mismatch repair MutS family.

This protein is involved in the repair of mismatches in DNA. It is possible that it carries out the mismatch recognition step. This protein has a weak ATPase activity. The polypeptide is DNA mismatch repair protein MutS (Paracidovorax citrulli (strain AAC00-1) (Acidovorax citrulli)).